A 373-amino-acid chain; its full sequence is Peroxisomal biogenesis factor 3 (373 aa).

Topologically, residues 1 to 15 are cytoplasmic; it reads MFRSTWNFLKRHKKK. Residues 1–45 form a targeting to peroxisomes region; it reads MFRSTWNFLKRHKKKCIFLGTVLGGVYILGKYGQKKIREIQEREA. The chain crosses the membrane as a helical span at residues 16–36; that stretch reads CIFLGTVLGGVYILGKYGQKK. Topologically, residues 37–116 are peroxisomal; that stretch reads IREIQEREAA…LKIISFTRSI (80 aa). The helical transmembrane segment at 117 to 140 threads the bilayer; sequence VAVYSTCMLVVLLRVQLNIIGGYI. Residues 120 to 136 are interaction with PEX19; the sequence is YSTCMLVVLLRVQLNII. Residues 141–373 lie on the Cytoplasmic side of the membrane; it reads YLDNAAVGKN…AFSTPQQLEK (233 aa).

It belongs to the peroxin-3 family. Interacts with PEX19.

The protein resides in the peroxisome membrane. Its function is as follows. Involved in peroxisome biosynthesis and integrity. Assembles membrane vesicles before the matrix proteins are translocated. As a docking factor for PEX19, is necessary for the import of peroxisomal membrane proteins in the peroxisomes. This is Peroxisomal biogenesis factor 3 (PEX3) from Bos taurus (Bovine).